We begin with the raw amino-acid sequence, 208 residues long: Small ribosomal subunit protein uS4 (208 aa).

Residues 98–163 (SRLDNVVYRA…LTPFVIARAV (66 aa)) form the S4 RNA-binding domain.

This sequence belongs to the universal ribosomal protein uS4 family. In terms of assembly, part of the 30S ribosomal subunit. Contacts protein S5. The interaction surface between S4 and S5 is involved in control of translational fidelity.

One of the primary rRNA binding proteins, it binds directly to 16S rRNA where it nucleates assembly of the body of the 30S subunit. In terms of biological role, with S5 and S12 plays an important role in translational accuracy. The chain is Small ribosomal subunit protein uS4 from Acidothermus cellulolyticus (strain ATCC 43068 / DSM 8971 / 11B).